The sequence spans 408 residues: Cobalt-precorrin-5B C(1)-methyltransferase (408 aa).

This sequence belongs to the CbiD family.

The enzyme catalyses Co-precorrin-5B + S-adenosyl-L-methionine = Co-precorrin-6A + S-adenosyl-L-homocysteine. Its pathway is cofactor biosynthesis; adenosylcobalamin biosynthesis; cob(II)yrinate a,c-diamide from sirohydrochlorin (anaerobic route): step 6/10. Functionally, catalyzes the methylation of C-1 in cobalt-precorrin-5B to form cobalt-precorrin-6A. The polypeptide is Cobalt-precorrin-5B C(1)-methyltransferase (Clostridioides difficile (strain 630) (Peptoclostridium difficile)).